The chain runs to 485 residues: Heat stress transcription factor A-1d (485 aa).

Disordered stretches follow at residues Met-1–Ala-34 and Arg-126–Ser-149. The DNA-binding element occupies Pro-35 to Pro-129. Residues Gly-136–Gln-146 are compositionally biased toward low complexity. The tract at residues Ala-152–Val-218 is hydrophobic repeat HR-A/B. Disordered regions lie at residues Gln-229–Val-269 and Pro-436–Lys-461. Residues Asn-238–Arg-252 carry the Bipartite nuclear localization signal motif. The span at Met-441–Asn-455 shows a compositional bias: polar residues. The Nuclear export signal motif lies at Leu-472–Leu-480.

It belongs to the HSF family. Class A subfamily. Homotrimer. Interacts with HSP90-2. Exhibits temperature-dependent phosphorylation.

The protein resides in the cytoplasm. It localises to the nucleus. Functionally, transcriptional regulator that specifically binds DNA sequence 5'-AGAAnnTTCT-3' known as heat shock promoter elements (HSE). This chain is Heat stress transcription factor A-1d (HSFA1D), found in Arabidopsis thaliana (Mouse-ear cress).